A 228-amino-acid chain; its full sequence is MNNGLMALQARLQHEFSNPGLLTRALTHRSFSLDHNERLEFLGDSVLGLAVADLLYERLSTLPEGDLSRVRANLVKQDTLHHLALGLGLPEVIRLGEGEARSGGHKRPSILADALEAVIGAVYLDAGFAVAQGLVRRLFQAVEIKSDMEAIGKDPKTELQEWLQGRKMNLPLYRVVATLGAAHKQTFDVECEIVELNFLERGIGGSRRAGEQAAAAAMLQTLKAKAAQ.

Residues 5 to 127 (LMALQARLQH…VIGAVYLDAG (123 aa)) form the RNase III domain. Residue E40 coordinates Mg(2+). The active site involves D44. Mg(2+) contacts are provided by D113 and E116. The active site involves E116. In terms of domain architecture, DRBM spans 154-224 (DPKTELQEWL…AAAMLQTLKA (71 aa)).

It belongs to the ribonuclease III family. In terms of assembly, homodimer. Requires Mg(2+) as cofactor.

Its subcellular location is the cytoplasm. The catalysed reaction is Endonucleolytic cleavage to 5'-phosphomonoester.. Functionally, digests double-stranded RNA. Involved in the processing of primary rRNA transcript to yield the immediate precursors to the large and small rRNAs (23S and 16S). Processes some mRNAs, and tRNAs when they are encoded in the rRNA operon. Processes pre-crRNA and tracrRNA of type II CRISPR loci if present in the organism. This chain is Ribonuclease 3, found in Albidiferax ferrireducens (strain ATCC BAA-621 / DSM 15236 / T118) (Rhodoferax ferrireducens).